A 146-amino-acid polypeptide reads, in one-letter code: 3-dehydroquinate dehydratase (146 aa).

Catalysis depends on Tyr-24, which acts as the Proton acceptor. Residues Asn-73, His-79, and Asp-86 each contribute to the substrate site. The Proton donor role is filled by His-99. Residues 100–101 (LS) and Arg-110 contribute to the substrate site.

It belongs to the type-II 3-dehydroquinase family. Homododecamer.

The enzyme catalyses 3-dehydroquinate = 3-dehydroshikimate + H2O. The protein operates within metabolic intermediate biosynthesis; chorismate biosynthesis; chorismate from D-erythrose 4-phosphate and phosphoenolpyruvate: step 3/7. Functionally, catalyzes a trans-dehydration via an enolate intermediate. The sequence is that of 3-dehydroquinate dehydratase from Shewanella baltica (strain OS185).